A 289-amino-acid polypeptide reads, in one-letter code: Protease HtpX homolog (289 aa).

2 consecutive transmembrane segments (helical) span residues 11–31 (AALFGVLWAVLLGLGAIIAAG) and 34–54 (STTPIWIMALIGVATTAYGYW). His138 lines the Zn(2+) pocket. Glu139 is an active-site residue. His142 contacts Zn(2+). 2 helical membrane passes run 152–172 (SVVAAVAGVITSVGQMLLIFG) and 182–202 (LATIAMALLAPFAASLIQMAI). Residue Glu207 coordinates Zn(2+).

It belongs to the peptidase M48B family. It depends on Zn(2+) as a cofactor.

The protein resides in the cell membrane. This is Protease HtpX homolog from Paenarthrobacter aurescens (strain TC1).